The sequence spans 269 residues: Undecaprenyl-diphosphatase (269 aa).

7 helical membrane passes run 41-61, 78-98, 107-127, 148-167, 184-204, 213-233, and 248-268; these read FATMFEIVIQLGAILAVVFHY, GFNLWFKIFIAFIPAAVIGLL, LFSPFTVAIALIAGAIMMIVI, SLLIGIAQVMSLFPGMSRSA, AEFSFFLAIPTMFAATTLSLL, LEWQALAVGFITSFLTALFVV, and FAYYRLAVGVLMILLVAEKIV.

Belongs to the UppP family.

It is found in the cell membrane. It carries out the reaction di-trans,octa-cis-undecaprenyl diphosphate + H2O = di-trans,octa-cis-undecaprenyl phosphate + phosphate + H(+). In terms of biological role, catalyzes the dephosphorylation of undecaprenyl diphosphate (UPP). Confers resistance to bacitracin. The protein is Undecaprenyl-diphosphatase of Thermoanaerobacter pseudethanolicus (strain ATCC 33223 / 39E) (Clostridium thermohydrosulfuricum).